A 134-amino-acid chain; its full sequence is DNA-binding protein StpA (134 aa).

Residues 73-94 are disordered; the sequence is EELLGNSSAAAPRAGKKRQPRP. The DNA-binding element occupies 112 to 117; the sequence is QGRTPK.

This sequence belongs to the histone-like protein H-NS family. As to quaternary structure, forms homodimers, can interact with H-NS. May interact with Hha and/or Cnu.

Its subcellular location is the cytoplasm. It localises to the nucleoid. A DNA-binding protein that acts in a fashion similar to H-NS, repressing gene transcription. A subset of H-NS/StpA-regulated genes require auxillary proteins for repression; these auxillary proteins (Hha and other similar proteins) may also modulate oligomerization of the H-NS/StpA complex. The polypeptide is DNA-binding protein StpA (stpA) (Escherichia coli O157:H7).